Consider the following 294-residue polypeptide: NAD kinase (294 aa).

The active-site Proton acceptor is Asp-74. NAD(+) is bound by residues 74–75, 148–149, His-159, Arg-176, Asp-178, 189–194, and Gln-249; these read DG, NE, and TAYSLS.

Belongs to the NAD kinase family. Requires a divalent metal cation as cofactor.

Its subcellular location is the cytoplasm. The catalysed reaction is NAD(+) + ATP = ADP + NADP(+) + H(+). Involved in the regulation of the intracellular balance of NAD and NADP, and is a key enzyme in the biosynthesis of NADP. Catalyzes specifically the phosphorylation on 2'-hydroxyl of the adenosine moiety of NAD to yield NADP. The protein is NAD kinase of Vibrio vulnificus (strain YJ016).